Consider the following 61-residue polypeptide: Small ribosomal subunit protein uS14 (61 aa).

Cys-24, Cys-27, Cys-40, and Cys-43 together coordinate Zn(2+).

Belongs to the universal ribosomal protein uS14 family. Zinc-binding uS14 subfamily. In terms of assembly, part of the 30S ribosomal subunit. Contacts proteins S3 and S10. Zn(2+) serves as cofactor.

In terms of biological role, binds 16S rRNA, required for the assembly of 30S particles and may also be responsible for determining the conformation of the 16S rRNA at the A site. The chain is Small ribosomal subunit protein uS14 from Clostridium perfringens (strain ATCC 13124 / DSM 756 / JCM 1290 / NCIMB 6125 / NCTC 8237 / Type A).